We begin with the raw amino-acid sequence, 189 residues long: Mediator of RNA polymerase II transcription subunit 10b (189 aa).

The tract at residues 1–22 (MDPTQNTSAGIGGSNGTIRYQT) is disordered.

Belongs to the Mediator complex subunit 10 family. Component of the Mediator complex.

It localises to the nucleus. Functionally, component of the Mediator complex, a coactivator involved in the regulated transcription of nearly all RNA polymerase II-dependent genes. Mediator functions as a bridge to convey information from gene-specific regulatory proteins to the basal RNA polymerase II transcription machinery. The Mediator complex, having a compact conformation in its free form, is recruited to promoters by direct interactions with regulatory proteins and serves for the assembly of a functional preinitiation complex with RNA polymerase II and the general transcription factors. The protein is Mediator of RNA polymerase II transcription subunit 10b (MED10B) of Arabidopsis thaliana (Mouse-ear cress).